The following is an 881-amino-acid chain: DNA mismatch repair protein MutS (881 aa).

Residue 627-634 (GPNMGGKS) coordinates ATP.

The protein belongs to the DNA mismatch repair MutS family.

Its function is as follows. This protein is involved in the repair of mismatches in DNA. It is possible that it carries out the mismatch recognition step. This protein has a weak ATPase activity. This is DNA mismatch repair protein MutS from Acinetobacter baumannii (strain AB307-0294).